The chain runs to 391 residues: Elongation factor Tu 1 (391 aa).

The tr-type G domain occupies 10 to 201; that stretch reads KPHVNIGTIG…AVDSYIPTPE (192 aa). The tract at residues 19–26 is G1; the sequence is GHVDHGKT. Residue 19–26 coordinates GTP; the sequence is GHVDHGKT. Thr-26 lines the Mg(2+) pocket. Residues 55–59 form a G2 region; sequence GITIS. The interval 76–79 is G3; that stretch reads DCPG. Residues 76-80 and 131-134 contribute to the GTP site; these read DCPGH and NKVD. Residues 131–134 form a G4 region; that stretch reads NKVD. The interval 169–171 is G5; the sequence is SAL.

Belongs to the TRAFAC class translation factor GTPase superfamily. Classic translation factor GTPase family. EF-Tu/EF-1A subfamily. As to quaternary structure, monomer.

It localises to the cytoplasm. The catalysed reaction is GTP + H2O = GDP + phosphate + H(+). Its function is as follows. GTP hydrolase that promotes the GTP-dependent binding of aminoacyl-tRNA to the A-site of ribosomes during protein biosynthesis. The polypeptide is Elongation factor Tu 1 (Rhizobium etli (strain ATCC 51251 / DSM 11541 / JCM 21823 / NBRC 15573 / CFN 42)).